Consider the following 312-residue polypeptide: MAAQKINEGLEHLAKAEKYLKTGFLKWKPDYDSAASEYGKAAVAFKNAKQFEQAKDACLREAVAHENNRALFHAAKAYEQAGMMLKEMQKLPEAVQLIEKASMMYLENGTPDTAAMALERAGKLIENVDPEKAVQLYQQTANVFENEERLRQAVELLGKASRLLVRGRRFDEAALSIQKEKNIYKEIENYPTCYKKTIAQVLVHLHRNDYVAAERCVRESYSIPGFNGSEDCAALEQLLEGYDQQDQDQVSDVCNSPLFKYMDNDYAKLGLSLVVPGGGIKKKSPATPQAKPDGVTATAADEEEDEYSGGLC.

The segment at 281–312 is disordered; it reads KKKSPATPQAKPDGVTATAADEEEDEYSGGLC. Residue serine 284 is modified to Phosphoserine. At threonine 287 the chain carries Phosphothreonine. Acidic residues predominate over residues 300 to 312; it reads ADEEEDEYSGGLC. Serine 308 is subject to Phosphoserine.

The protein belongs to the SNAP family. In terms of assembly, interacts with RAB11FIP5. Interacts with VTI1A.

Its subcellular location is the membrane. It is found in the golgi apparatus. In terms of biological role, required for vesicular transport between the endoplasmic reticulum and the Golgi apparatus. The chain is Gamma-soluble NSF attachment protein from Homo sapiens (Human).